The sequence spans 301 residues: Probable tRNA pseudouridine synthase B (301 aa).

The active-site Nucleophile is the aspartate 54. One can recognise a PUA domain in the interval 227–301 (LPRLTIADSA…VVVALERVLV (75 aa)).

The protein belongs to the pseudouridine synthase TruB family. Type 2 subfamily.

It catalyses the reaction uridine(55) in tRNA = pseudouridine(55) in tRNA. Could be responsible for synthesis of pseudouridine from uracil-55 in the psi GC loop of transfer RNAs. The sequence is that of Probable tRNA pseudouridine synthase B from Halobacterium salinarum (strain ATCC 29341 / DSM 671 / R1).